Here is a 345-residue protein sequence, read N- to C-terminus: Phosphate acyltransferase (345 aa).

Belongs to the PlsX family. As to quaternary structure, homodimer. Probably interacts with PlsY.

Its subcellular location is the cytoplasm. The catalysed reaction is a fatty acyl-[ACP] + phosphate = an acyl phosphate + holo-[ACP]. It participates in lipid metabolism; phospholipid metabolism. Its function is as follows. Catalyzes the reversible formation of acyl-phosphate (acyl-PO(4)) from acyl-[acyl-carrier-protein] (acyl-ACP). This enzyme utilizes acyl-ACP as fatty acyl donor, but not acyl-CoA. This chain is Phosphate acyltransferase, found in Photorhabdus laumondii subsp. laumondii (strain DSM 15139 / CIP 105565 / TT01) (Photorhabdus luminescens subsp. laumondii).